Reading from the N-terminus, the 688-residue chain is Methionine--tRNA ligase (688 aa).

The 'HIGH' region motif lies at 13–23; it reads PYANGQIHIGH. Zn(2+)-binding residues include Cys144, Cys147, Cys157, and Cys160. A 'KMSKS' region motif is present at residues 335-339; that stretch reads KMSKS. Residue Lys338 participates in ATP binding. The region spanning 582-688 is the tRNA-binding domain; it reads DFAKIDLRVA…SGAVPGMRIG (107 aa).

The protein belongs to the class-I aminoacyl-tRNA synthetase family. MetG type 1 subfamily. As to quaternary structure, homodimer. Zn(2+) is required as a cofactor.

It localises to the cytoplasm. It catalyses the reaction tRNA(Met) + L-methionine + ATP = L-methionyl-tRNA(Met) + AMP + diphosphate. In terms of biological role, is required not only for elongation of protein synthesis but also for the initiation of all mRNA translation through initiator tRNA(fMet) aminoacylation. In Cupriavidus pinatubonensis (strain JMP 134 / LMG 1197) (Cupriavidus necator (strain JMP 134)), this protein is Methionine--tRNA ligase.